The following is a 166-amino-acid chain: Cytochrome c-type biogenesis protein CcmE (166 aa).

Residues 1 to 8 (MNAVRRKK) are Cytoplasmic-facing. The helical; Signal-anchor for type II membrane protein transmembrane segment at 9-29 (LMWVMFTLAGAVIAVALVIYA) threads the bilayer. The Periplasmic portion of the chain corresponds to 30-166 (IGKQTDYYFD…KLHETKTLQQ (137 aa)). Residues His124 and Tyr128 each coordinate heme. The tract at residues 133–166 (VAKSMKENNRSGAVPSSEQYNPAEKLHETKTLQQ) is disordered. The span at 142 to 152 (RSGAVPSSEQY) shows a compositional bias: polar residues. Over residues 156–166 (EKLHETKTLQQ) the composition is skewed to basic and acidic residues.

Belongs to the CcmE/CycJ family.

The protein resides in the cell inner membrane. Its function is as follows. Heme chaperone required for the biogenesis of c-type cytochromes. Transiently binds heme delivered by CcmC and transfers the heme to apo-cytochromes in a process facilitated by CcmF and CcmH. The chain is Cytochrome c-type biogenesis protein CcmE from Psychrobacter arcticus (strain DSM 17307 / VKM B-2377 / 273-4).